Consider the following 290-residue polypeptide: 4-hydroxy-tetrahydrodipicolinate synthase (290 aa).

A pyruvate-binding site is contributed by threonine 44. The Proton donor/acceptor role is filled by tyrosine 132. Catalysis depends on lysine 160, which acts as the Schiff-base intermediate with substrate. Residue isoleucine 202 coordinates pyruvate.

It belongs to the DapA family. As to quaternary structure, homotetramer; dimer of dimers.

It localises to the cytoplasm. It catalyses the reaction L-aspartate 4-semialdehyde + pyruvate = (2S,4S)-4-hydroxy-2,3,4,5-tetrahydrodipicolinate + H2O + H(+). Its pathway is amino-acid biosynthesis; L-lysine biosynthesis via DAP pathway; (S)-tetrahydrodipicolinate from L-aspartate: step 3/4. Functionally, catalyzes the condensation of (S)-aspartate-beta-semialdehyde [(S)-ASA] and pyruvate to 4-hydroxy-tetrahydrodipicolinate (HTPA). The chain is 4-hydroxy-tetrahydrodipicolinate synthase from Trichlorobacter lovleyi (strain ATCC BAA-1151 / DSM 17278 / SZ) (Geobacter lovleyi).